Consider the following 247-residue polypeptide: Sugar fermentation stimulation protein homolog (247 aa).

The protein belongs to the SfsA family.

The polypeptide is Sugar fermentation stimulation protein homolog (Oleidesulfovibrio alaskensis (strain ATCC BAA-1058 / DSM 17464 / G20) (Desulfovibrio alaskensis)).